We begin with the raw amino-acid sequence, 336 residues long: Putative ataxin-3 homolog (336 aa).

The 184-residue stretch at 10–193 (GGLLYHEVQE…KECPMATEGS (184 aa)) folds into the Josephin domain. Catalysis depends on cysteine 23, which acts as the Nucleophile. The Proton acceptor role is filled by histidine 132. Asparagine 147 is an active-site residue. The region spanning 244–263 (QEEADLNAAIAASLMDTGGP) is the UIM domain. Residues 281 to 336 (IESTSGEMSKDGNLEEQGANKSETSEPNSDNIESASGSNPKQNTTSLEGKESIKED) are disordered. Positions 299 to 327 (ANKSETSEPNSDNIESASGSNPKQNTTSL) are enriched in polar residues.

It is found in the nucleus. The enzyme catalyses Thiol-dependent hydrolysis of ester, thioester, amide, peptide and isopeptide bonds formed by the C-terminal Gly of ubiquitin (a 76-residue protein attached to proteins as an intracellular targeting signal).. Functionally, interacts with key regulators of transcription and represses transcription. Acts as a histone-binding protein that regulates transcription. Acts as a deubiquitinating enzyme. This is Putative ataxin-3 homolog from Oryza sativa subsp. japonica (Rice).